We begin with the raw amino-acid sequence, 125 residues long: Small ribosomal subunit protein uS11 (125 aa).

This sequence belongs to the universal ribosomal protein uS11 family. As to quaternary structure, part of the 30S ribosomal subunit. Interacts with proteins S7 and S18. Binds to IF-3.

Its function is as follows. Located on the platform of the 30S subunit, it bridges several disparate RNA helices of the 16S rRNA. Forms part of the Shine-Dalgarno cleft in the 70S ribosome. This Coprothermobacter proteolyticus (strain ATCC 35245 / DSM 5265 / OCM 4 / BT) protein is Small ribosomal subunit protein uS11.